The sequence spans 84 residues: Antimicrobial peptide MeuNaTxbeta-2 (84 aa).

The first 20 residues, 1-20 (MMKTVIVLIVFSLVMIVVKS), serve as a signal peptide directing secretion. The LCN-type CS-alpha/beta domain maps to 21–83 (DNGYLLDKYT…LWHYETNRCR (63 aa)). 4 cysteine pairs are disulfide-bonded: Cys32/Cys82, Cys36/Cys57, Cys43/Cys64, and Cys47/Cys66.

Expressed by the venom gland.

It localises to the secreted. Antimicrobial peptide with activity against both Gram-positive and -negative bacteria. The polypeptide is Antimicrobial peptide MeuNaTxbeta-2 (Mesobuthus eupeus (Lesser Asian scorpion)).